Consider the following 458-residue polypeptide: Protein adenylyltransferase FICD (458 aa).

Topologically, residues 1–23 (MILMPMASVVAVAEPKWVSVWGR) are cytoplasmic. The chain crosses the membrane as a helical; Signal-anchor for type II membrane protein span at residues 24 to 44 (FLWMALLSMALGSLLALLLPL). The Lumenal portion of the chain corresponds to 45-458 (GVVEEHCLAV…GFKETLPVRP (414 aa)). Thr80 bears the O-AMP-threonine; by autocatalysis mark. TPR repeat units follow at residues 106–139 (AKAALNQALEMKRQGKRGKAHKLFLHALKMDPGF) and 140–173 (VDALNEFGIFSEEDKDIIQADYLYTRALTISPFH). Residue Thr183 is modified to O-AMP-threonine; by autocatalysis. The short motif at 230–235 (TVAIEG) is the Inhibitory (S/T)XXXE(G/N) motif element. Glu234 lines the ATP pocket. Residue Asn275 is glycosylated (N-linked (GlcNAc...) asparagine). Residues 285-420 (VTMDDMLEIH…VRPFIRFIAK (136 aa)) enclose the Fido domain. 316–319 (VGHH) is a binding site for ATP. The active site involves His363. ATP contacts are provided by residues 367 to 374 (DGNGRTSR), 399 to 400 (YY), and Asn407.

It belongs to the fic family. In terms of assembly, homodimer. Interacts with HD. Mg(2+) serves as cofactor. The cofactor is Mn(2+). Auto-AMPylated in vitro.

The protein localises to the endoplasmic reticulum membrane. It carries out the reaction L-tyrosyl-[protein] + ATP = O-(5'-adenylyl)-L-tyrosyl-[protein] + diphosphate. The enzyme catalyses 3-O-(5'-adenylyl)-L-threonyl-[protein] + H2O = L-threonyl-[protein] + AMP + H(+). The catalysed reaction is L-threonyl-[protein] + ATP = 3-O-(5'-adenylyl)-L-threonyl-[protein] + diphosphate. Its activity is regulated as follows. The side chain of Glu-234 determines which of the two opposing activities (AMPylase or de-AMPylase) will take place. In response to endoplasmic reticulum stress, mediates de-AMPylase activity. Adenylyltransferase activity is inhibited by the inhibitory helix present at the N-terminus: Glu-234 binds ATP and competes with ATP-binding at Arg-374, thereby preventing adenylyltransferase activity. In unstressed cells, disengagement of Glu-234 promotes adenylyltransferase activity. Activation dissociates ATP-binding from Glu-234, allowing ordered binding of the entire ATP moiety with the alpha-phosphate in an orientation that is productive for accepting an incoming target hydroxyl side chain. Protein that can both mediate the addition of adenosine 5'-monophosphate (AMP) to specific residues of target proteins (AMPylation), and the removal of the same modification from target proteins (de-AMPylation), depending on the context. The side chain of Glu-231 determines which of the two opposing activities (AMPylase or de-AMPylase) will take place. Acts as a key regulator of the ERN1/IRE1-mediated unfolded protein response (UPR) by mediating AMPylation or de-AMPylation of HSPA5/BiP. In unstressed cells, acts as an adenylyltransferase by mediating AMPylation of HSPA5/BiP at 'Thr-518', thereby inactivating it. In response to endoplasmic reticulum stress, acts as a phosphodiesterase by mediating removal of ATP (de-AMPylation) from HSPA5/BiP at 'Thr-518', leading to restore HSPA5/BiP activity. Although it is able to AMPylate RhoA, Rac and Cdc42 Rho GTPases in vitro, Rho GTPases do not constitute physiological substrates. This chain is Protein adenylyltransferase FICD, found in Mus musculus (Mouse).